A 295-amino-acid polypeptide reads, in one-letter code: Pyridoxal 5'-phosphate synthase subunit PdxS (295 aa).

D25 contributes to the D-ribose 5-phosphate binding site. K82 serves as the catalytic Schiff-base intermediate with D-ribose 5-phosphate. G154 is a binding site for D-ribose 5-phosphate. R166 is a D-glyceraldehyde 3-phosphate binding site. D-ribose 5-phosphate is bound by residues G215 and 236 to 237; that span reads GS.

The protein belongs to the PdxS/SNZ family. As to quaternary structure, in the presence of PdxT, forms a dodecamer of heterodimers.

The catalysed reaction is aldehydo-D-ribose 5-phosphate + D-glyceraldehyde 3-phosphate + L-glutamine = pyridoxal 5'-phosphate + L-glutamate + phosphate + 3 H2O + H(+). It functions in the pathway cofactor biosynthesis; pyridoxal 5'-phosphate biosynthesis. Catalyzes the formation of pyridoxal 5'-phosphate from ribose 5-phosphate (RBP), glyceraldehyde 3-phosphate (G3P) and ammonia. The ammonia is provided by the PdxT subunit. Can also use ribulose 5-phosphate and dihydroxyacetone phosphate as substrates, resulting from enzyme-catalyzed isomerization of RBP and G3P, respectively. The polypeptide is Pyridoxal 5'-phosphate synthase subunit PdxS (Oceanobacillus iheyensis (strain DSM 14371 / CIP 107618 / JCM 11309 / KCTC 3954 / HTE831)).